Reading from the N-terminus, the 214-residue chain is Protein get-1 (214 aa).

Over 1–4 the chain is Lumenal; it reads MPSL. A helical membrane pass occupies residues 5 to 24; sequence LVVIFVIELFVQLVNTIGAA. The Cytoplasmic portion of the chain corresponds to 25 to 110; the sequence is TINNLLWRIA…KFDRTLTTVR (86 aa). Residues 73–107 are a coiled coil; that stretch reads KWARLRRQHDKLLEDLEKRKKELDAAKTKFDRTLT. A helical transmembrane segment spans residues 111-131; the sequence is VVATRGLQWFLPFWYSREPMF. Residues 132–155 are Lumenal-facing; sequence WLPYGWFPYYVEWFASFPRAPLGS. Residues 156-172 form a helical membrane-spanning segment; it reads VSIVVWQWACTGVIKLV. Residues 173 to 214 are Cytoplasmic-facing; it reads IETVMAVVGLIVAARQKQQEKQKAKQAVPAAGGGDSKAEEAK. Positions 190–214 are disordered; that stretch reads QQEKQKAKQAVPAAGGGDSKAEEAK.

Belongs to the WRB/GET1 family. Interacts with GET3.

It is found in the endoplasmic reticulum membrane. In terms of biological role, required for the post-translational delivery of tail-anchored (TA) proteins to the endoplasmic reticulum. Acts as a membrane receptor for soluble GET3, which recognizes and selectively binds the transmembrane domain of TA proteins in the cytosol. This chain is Protein get-1 (get-1), found in Neurospora crassa (strain ATCC 24698 / 74-OR23-1A / CBS 708.71 / DSM 1257 / FGSC 987).